A 206-amino-acid polypeptide reads, in one-letter code: Probable metallo-hydrolase MJ0888 (206 aa).

Zn(2+) contacts are provided by histidine 55, histidine 57, aspartate 59, histidine 60, histidine 130, aspartate 147, and histidine 190.

It belongs to the metallo-beta-lactamase superfamily. Requires Zn(2+) as cofactor.

The protein is Probable metallo-hydrolase MJ0888 of Methanocaldococcus jannaschii (strain ATCC 43067 / DSM 2661 / JAL-1 / JCM 10045 / NBRC 100440) (Methanococcus jannaschii).